The sequence spans 81 residues: Small ribosomal subunit protein bS16 (81 aa).

Belongs to the bacterial ribosomal protein bS16 family.

This is Small ribosomal subunit protein bS16 from Caldicellulosiruptor bescii (strain ATCC BAA-1888 / DSM 6725 / KCTC 15123 / Z-1320) (Anaerocellum thermophilum).